We begin with the raw amino-acid sequence, 439 residues long: Ribosomal protein uS12 methylthiotransferase RimO (439 aa).

The MTTase N-terminal domain maps to 6-116; the sequence is GKVGFVSLGC…VMNQVHQVAP (111 aa). Residues Cys-15, Cys-51, Cys-80, Cys-148, Cys-152, and Cys-155 each coordinate [4Fe-4S] cluster. A Radical SAM core domain is found at 134–371; sequence LTPKHYAYLK…MEVQQRISAS (238 aa). The region spanning 374 to 439 is the TRAM domain; that stretch reads QAKIGKRMDV…DEYDLWGRPV (66 aa).

Belongs to the methylthiotransferase family. RimO subfamily. [4Fe-4S] cluster serves as cofactor.

The protein localises to the cytoplasm. The catalysed reaction is L-aspartate(89)-[ribosomal protein uS12]-hydrogen + (sulfur carrier)-SH + AH2 + 2 S-adenosyl-L-methionine = 3-methylsulfanyl-L-aspartate(89)-[ribosomal protein uS12]-hydrogen + (sulfur carrier)-H + 5'-deoxyadenosine + L-methionine + A + S-adenosyl-L-homocysteine + 2 H(+). Catalyzes the methylthiolation of an aspartic acid residue of ribosomal protein uS12. In Hahella chejuensis (strain KCTC 2396), this protein is Ribosomal protein uS12 methylthiotransferase RimO.